The following is an 823-amino-acid chain: Ciliated left-right organizer ZP-N domains-containing protein (823 aa).

Positions 1 to 22 are cleaved as a signal peptide; it reads MWGSPALAWAVWLACVQPTVFP. 4 disordered regions span residues 206-242, 269-422, 434-520, and 632-656; these read MGLY…LLPL, LVHI…DLLH, GPFL…SPSP, and LPRE…EGPG. A compositionally biased stretch (pro residues) spans 216-230; the sequence is TVTVQSPRQGLLQRW. The segment covering 389 to 402 has biased composition (low complexity); it reads GPETPPAGVPPAAS.

It is found in the secreted. Plays a role in left-right patterning process. The protein is Ciliated left-right organizer ZP-N domains-containing protein of Homo sapiens (Human).